Consider the following 743-residue polypeptide: Apo-petrobactin exporter (743 aa).

A run of 12 helical transmembrane segments spans residues 20-40, 199-219, 223-243, 258-278, 303-323, 337-357, 406-426, 561-581, 584-604, 613-633, 672-692, and 694-714; these read WITL…LPQV, ADVK…ILLY, ILAI…SPTL, AISI…LFLI, GGAI…LLLA, VAVF…LLIF, WTII…VPRI, DEAV…LVYL, IVAM…ALGA, MGAP…LVAL, AGLI…QVLV, and FGIV…PLLV.

Belongs to the resistance-nodulation-cell division (RND) (TC 2.A.6) family. MmpL subfamily.

The protein localises to the cell membrane. In terms of biological role, exports the siderophore petrobactin. The sequence is that of Apo-petrobactin exporter from Bacillus anthracis.